The chain runs to 607 residues: Condensin-2 complex subunit H2 (607 aa).

Thr-19 bears the Phosphothreonine mark. Residues Ser-95, Ser-231, Ser-235, and Ser-252 each carry the phosphoserine modification. Disordered stretches follow at residues 211–312 (YPMS…WQSL) and 325–347 (KGKPYSVPPGVEEAPGQKRKRKG). Acidic residues predominate over residues 254 to 263 (GEEDAEDGAE). At Ser-494 the chain carries Phosphoserine.

This sequence belongs to the CND2 H2 (condensin-2 subunit 2) family. Component of the condensin-2 complex, which contains the SMC2 and SMC4 heterodimer, and three non SMC subunits, NCAPG2, NCAPH2 and NCAPD3 that probably regulate the complex.

It is found in the nucleus. In terms of biological role, regulatory subunit of the condensin-2 complex, a complex that seems to provide chromosomes with an additional level of organization and rigidity and in establishing mitotic chromosome architecture. May promote the resolution of double-strand DNA catenanes (intertwines) between sister chromatids. Condensin-mediated compaction likely increases tension in catenated sister chromatids, providing directionality for type II topoisomerase-mediated strand exchanges toward chromatid decatenation. Required for decatenation of chromatin bridges at anaphase. Early in neurogenesis, may play an essential role to ensure accurate mitotic chromosome condensation in neuron stem cells, ultimately affecting neuron pool and cortex size. Seems to have lineage-specific role in T-cell development. The polypeptide is Condensin-2 complex subunit H2 (Mus musculus (Mouse)).